The following is a 91-amino-acid chain: Small ribosomal subunit protein uS15 (91 aa).

The protein belongs to the universal ribosomal protein uS15 family. In terms of assembly, part of the 30S ribosomal subunit. Forms a bridge to the 50S subunit in the 70S ribosome, contacting the 23S rRNA.

In terms of biological role, one of the primary rRNA binding proteins, it binds directly to 16S rRNA where it helps nucleate assembly of the platform of the 30S subunit by binding and bridging several RNA helices of the 16S rRNA. Forms an intersubunit bridge (bridge B4) with the 23S rRNA of the 50S subunit in the ribosome. This chain is Small ribosomal subunit protein uS15, found in Rickettsia bellii (strain OSU 85-389).